Here is a 169-residue protein sequence, read N- to C-terminus: Ribosome maturation factor RimM (169 aa).

The PRC barrel domain maps to 92–166 (NKEYYWNDIF…IVIDLTNLNN (75 aa)).

The protein belongs to the RimM family. As to quaternary structure, binds ribosomal protein uS19.

It localises to the cytoplasm. Functionally, an accessory protein needed during the final step in the assembly of 30S ribosomal subunit, possibly for assembly of the head region. Essential for efficient processing of 16S rRNA. May be needed both before and after RbfA during the maturation of 16S rRNA. It has affinity for free ribosomal 30S subunits but not for 70S ribosomes. The protein is Ribosome maturation factor RimM of Buchnera aphidicola subsp. Cinara cedri (strain Cc).